The primary structure comprises 358 residues: Period circadian protein (358 aa).

PAS domains are found at residues 1 to 120 and 138 to 240; these read GVVM…QTVP and FIMR…YIIE.

In terms of assembly, forms a heterodimer with timeless (TIM); the complex then translocates into the nucleus. Phosphorylated with a circadian rhythmicity.

It localises to the nucleus. Its function is as follows. Involved in the generation of biological rhythms. The biological cycle depends on the rhythmic formation and nuclear localization of the tim-per complex. Light induces the degradation of tim, which promotes elimination of per. Nuclear activity of the heterodimer coordinatively regulates per and tim transcription negative feedback loop. Behaves as a negative element in circadian transcriptional loop. Does not appear to bind DNA, suggesting indirect transcriptional inhibition. This is Period circadian protein (per) from Hyalophora cecropia (Cecropia moth).